Reading from the N-terminus, the 175-residue chain is ATP synthase subunit delta (175 aa).

The protein belongs to the ATPase delta chain family. As to quaternary structure, F-type ATPases have 2 components, F(1) - the catalytic core - and F(0) - the membrane proton channel. F(1) has five subunits: alpha(3), beta(3), gamma(1), delta(1), epsilon(1). F(0) has three main subunits: a(1), b(2) and c(10-14). The alpha and beta chains form an alternating ring which encloses part of the gamma chain. F(1) is attached to F(0) by a central stalk formed by the gamma and epsilon chains, while a peripheral stalk is formed by the delta and b chains.

It localises to the cell inner membrane. Its function is as follows. F(1)F(0) ATP synthase produces ATP from ADP in the presence of a proton or sodium gradient. F-type ATPases consist of two structural domains, F(1) containing the extramembraneous catalytic core and F(0) containing the membrane proton channel, linked together by a central stalk and a peripheral stalk. During catalysis, ATP synthesis in the catalytic domain of F(1) is coupled via a rotary mechanism of the central stalk subunits to proton translocation. In terms of biological role, this protein is part of the stalk that links CF(0) to CF(1). It either transmits conformational changes from CF(0) to CF(1) or is implicated in proton conduction. The polypeptide is ATP synthase subunit delta (Stenotrophomonas maltophilia (strain R551-3)).